Here is a 361-residue protein sequence, read N- to C-terminus: Zygote arrest protein 1 (361 aa).

Disordered stretches follow at residues 1 to 23 (MFPASTFHPCPHPYPQATKAGDG), 98 to 128 (QPAGCRASPDARSGSCQPRGHAGAGRSPRSW), and 148 to 252 (VAGG…EQDK). Threonine 154 bears the Phosphothreonine; by CDK1 mark. Phosphoserine; by CDK1 is present on serine 161. Positions 168 to 177 (REPEPREVAA) are enriched in basic and acidic residues. The 3CxxC-type zinc finger occupies 263 to 346 (KYGYYHCKDC…RQDLCGRCKD (84 aa)).

It belongs to the ZAR1 family. In terms of assembly, interacts with YBX2. Post-translationally, phosphorylation by CDK1 does not regulate formation of MARDO (mitochondria-associated ribonucleoprotein domain) membraneless compartment. In terms of processing, ubiquitinated and degradaded by the proteasome during oocyte meiotic maturation, leading to MARDO (mitochondria-associated ribonucleoprotein domain) membraneless compartment dissolution. Ovary. Expressed in primary oocytes (from primary through antral follicle stages) and during the progression from Meiosis I to Meiosis II. The mRNA is detected in growing oocytes (early primary follicle, type 3a) through fully grown oocytes (antral follicle, type 8).

It is found in the cytoplasm. It localises to the cytoplasmic ribonucleoprotein granule. MRNA-binding protein that mediates formation of MARDO (mitochondria-associated ribonucleoprotein domain), a membraneless compartment that stores maternal mRNAs in oocytes. MARDO assembly around mitochondria is directed by an increase in mitochondrial membrane potential during oocyte growth. Promotes formation of MARDO phase-separated membraneless compartment by undergoing liquid-liquid phase separation upon binding to maternal mRNAs. Binds to the 3'-UTR of maternal mRNAs. Maternal mRNAs stored in the MARDO are translationally repressed. Essential for female fertility and oocyte-to-embryo transition by coordinating maternal mRNA storage, translation and degradation. In Mus musculus (Mouse), this protein is Zygote arrest protein 1.